The chain runs to 83 residues: MAGTTGERPFSDILTSIRYWVIHSITIPSLFIAGWLFVSTGLAYDVFGTPRPNEYFTEDRQEAPLITDRFNSLEQVKKLSNIR.

A helical membrane pass occupies residues Val-21–Trp-35. His-23 is a binding site for heme.

The protein belongs to the PsbE/PsbF family. As to quaternary structure, heterodimer of an alpha subunit and a beta subunit. PSII is composed of 1 copy each of membrane proteins PsbA, PsbB, PsbC, PsbD, PsbE, PsbF, PsbH, PsbI, PsbJ, PsbK, PsbL, PsbM, PsbT, PsbX, PsbY, PsbZ, Psb30/Ycf12, at least 3 peripheral proteins of the oxygen-evolving complex and a large number of cofactors. It forms dimeric complexes. It depends on heme b as a cofactor.

It localises to the plastid. Its subcellular location is the chloroplast thylakoid membrane. Functionally, this b-type cytochrome is tightly associated with the reaction center of photosystem II (PSII). PSII is a light-driven water:plastoquinone oxidoreductase that uses light energy to abstract electrons from H(2)O, generating O(2) and a proton gradient subsequently used for ATP formation. It consists of a core antenna complex that captures photons, and an electron transfer chain that converts photonic excitation into a charge separation. The sequence is that of Cytochrome b559 subunit alpha from Tupiella akineta (Green alga).